The primary structure comprises 223 residues: MSVQAEIGILDHVDGSSEFVSQDTKVICSVTGPIEPKARQELPTQLALEIIVRPAKGVATTREKVLEDKLRAVLTPLITRHCYPRQLCQITCQILESGEDEAEFSLRELSCCINAAFLALVDAGIALNSMCASIPIAIIKDTSDIIVDPTAEQLKISLSVHTLALEFVNGGKVVKNVLLLDSNGDFNEDQLFSLLELGEQKCQELVTNIRRIIQDNISPRLVV.

It belongs to the RNase PH family. Component of the RNA exosome complex. Specifically part of the catalytically inactive RNA exosome core complex (Exo-9) which may associate with the catalytic subunits RRP6 and DIS3 in cytoplasmic- and nuclear-specific RNA exosome complex forms. Exo-9 is formed by a hexameric base ring of RNase PH domain-containing subunits and a cap ring consisting of CSL4, RRP4 and RRP40.

The protein resides in the cytoplasm. It is found in the nucleus. It localises to the nucleolus. In terms of biological role, non-catalytic component of the RNA exosome complex which has 3'-&gt;5' exoribonuclease activity and participates in a multitude of cellular RNA processing and degradation events. In the nucleus, the RNA exosome complex is involved in proper maturation of stable RNA species such as rRNA, snRNA and snoRNA, in the elimination of RNA processing by-products and non-coding 'pervasive' transcripts, such as antisense RNA species and cryptic unstable transcripts (CUTs), and of mRNAs with processing defects, thereby limiting or excluding their export to the cytoplasm. In the cytoplasm, the RNA exosome complex is involved in general mRNA turnover and in RNA surveillance pathways, preventing translation of aberrant mRNAs. The catalytic inactive RNA exosome core complex of 9 subunits (Exo-9) is proposed to play a pivotal role in the binding and presentation of RNA for ribonucleolysis, and to serve as a scaffold for the association with catalytic subunits and accessory proteins or complexes. RRP46 is part of the hexameric ring of RNase PH domain-containing subunits proposed to form a central channel which threads RNA substrates for degradation. The sequence is that of Exosome complex component RRP46 (RRP46) from Saccharomyces cerevisiae (strain ATCC 204508 / S288c) (Baker's yeast).